We begin with the raw amino-acid sequence, 403 residues long: Exodeoxyribonuclease 7 large subunit (403 aa).

This sequence belongs to the XseA family. Heterooligomer composed of large and small subunits.

The protein resides in the cytoplasm. The enzyme catalyses Exonucleolytic cleavage in either 5'- to 3'- or 3'- to 5'-direction to yield nucleoside 5'-phosphates.. Bidirectionally degrades single-stranded DNA into large acid-insoluble oligonucleotides, which are then degraded further into small acid-soluble oligonucleotides. This chain is Exodeoxyribonuclease 7 large subunit, found in Streptomyces griseus subsp. griseus (strain JCM 4626 / CBS 651.72 / NBRC 13350 / KCC S-0626 / ISP 5235).